Here is a 47-residue protein sequence, read N- to C-terminus: Zinc-finger protein TK0143 (47 aa).

The C2H2-type zinc-finger motif lies at 18–41; that stretch reads FRCPRCGMVFRSAKAYTRHVNKAH. Positions 20, 23, 36, and 41 each coordinate Zn(2+).

Crystallized in association with 70S ribosomes. Zn(2+) serves as cofactor.

The sequence is that of Zinc-finger protein TK0143 from Thermococcus kodakarensis (strain ATCC BAA-918 / JCM 12380 / KOD1) (Pyrococcus kodakaraensis (strain KOD1)).